The chain runs to 219 residues: Lipoprotein-releasing system ATP-binding protein LolD (219 aa).

Residues 3-219 (IEARNIRKSF…HMRDGLLFSE (217 aa)) form the ABC transporter domain. 35–42 (GTSGAGKT) is a binding site for ATP.

This sequence belongs to the ABC transporter superfamily. Lipoprotein translocase (TC 3.A.1.125) family. In terms of assembly, the complex is composed of two ATP-binding proteins (LolD) and two transmembrane proteins (LolC and LolE).

It is found in the cell inner membrane. In terms of biological role, part of the ABC transporter complex LolCDE involved in the translocation of mature outer membrane-directed lipoproteins, from the inner membrane to the periplasmic chaperone, LolA. Responsible for the formation of the LolA-lipoprotein complex in an ATP-dependent manner. This Porphyromonas gingivalis (strain ATCC BAA-308 / W83) protein is Lipoprotein-releasing system ATP-binding protein LolD.